A 192-amino-acid chain; its full sequence is Adenine phosphoribosyltransferase (192 aa).

This sequence belongs to the purine/pyrimidine phosphoribosyltransferase family. As to quaternary structure, homodimer.

It localises to the cytoplasm. The catalysed reaction is AMP + diphosphate = 5-phospho-alpha-D-ribose 1-diphosphate + adenine. The protein operates within purine metabolism; AMP biosynthesis via salvage pathway; AMP from adenine: step 1/1. Functionally, catalyzes a salvage reaction resulting in the formation of AMP, that is energically less costly than de novo synthesis. The chain is Adenine phosphoribosyltransferase from Corynebacterium efficiens (strain DSM 44549 / YS-314 / AJ 12310 / JCM 11189 / NBRC 100395).